Here is a 623-residue protein sequence, read N- to C-terminus: Protein EDS1 (623 aa).

An N-acetylalanine modification is found at alanine 2. Residue serine 123 is the Nucleophile of the active site. Active-site charge relay system residues include aspartate 187 and histidine 317. Positions 358 to 383 (VQAALEEEKKRVENQKKIIQVIEQER) form a coiled coil.

In terms of assembly, homodimer. Interacts with RPS4, RPS6, SNC1, SRFR1, AvrRps4 and HopA1. Part of a nuclear complex made of EDS1, PAD4 and SAG101, that can be redirected to the cytoplasm in the presence of an extranuclear form of EDS1. Interacts (via N-terminus) with PAD4 (via N-terminus). Interacts (via N-terminus) with SAG101. EDS1-SAG101 and EDS1-PAD4 form separate complexes in pathogen-unchallenged cells. Part of a nuclear protein complex made of VICTR, PAD4 and EDS1. Interacts with VICTR.

Its subcellular location is the nucleus. It is found in the cytoplasm. The protein localises to the microsome. Its function is as follows. Positive regulator of basal resistance and of effector-triggered immunity specifically mediated by TIR-NB-LRR (TNL) resistance proteins. Disruption by bacterial effector of EDS1-TIR-NB-LRR resistance protein interactions constitutes the first step in resistance activation. Acts redundantly with salicylic acid to regulate resistance gene-mediated signaling. Triggers early plant defenses and hypersensitive response independently of PAD4, and then recruits PAD4 to potentiate plant defenses through the accumulation of salicylic acid. Nuclear localization is essential for basal and TNL-conditioned immunity and for reprogramming defense gene expression, while cytoplasmic EDS1 is required to induce a complete immune response. Heterodimerization with PAD4 and/or SGA101 is necessary for TNL-mediated effector-triggered immunity. Contributes to nonhost resistance against E.amylovora. Loss of EDS1-PAD4 interaction compromises basal but not TNL-triggered resistance. Necessary for systemic acquired resistance (SAR) signal generation and perception. Has no direct lipase activity. Putative lipase activity is dispensable for immune functions. This Arabidopsis thaliana (Mouse-ear cress) protein is Protein EDS1.